A 173-amino-acid chain; its full sequence is C-phycocyanin beta subunit (173 aa).

Asn73 carries the N4-methylasparagine modification. Residues Cys83 and Cys154 each contribute to the (2R,3E)-phycocyanobilin site.

This sequence belongs to the phycobiliprotein family. Heterodimer of an alpha and a beta subunit, which further assembles into trimers and the trimers into hexamers. In terms of processing, contains two covalently linked bilin chromophores.

The protein resides in the cellular thylakoid membrane. Its function is as follows. Light-harvesting photosynthetic bile pigment-protein from the phycobiliprotein complex (phycobilisome, PBS). Phycocyanin is the major phycobiliprotein in the PBS rod. This is C-phycocyanin beta subunit (cpcB1) from Synechococcus elongatus (strain ATCC 33912 / PCC 7942 / FACHB-805) (Anacystis nidulans R2).